The chain runs to 149 residues: Azurin (149 aa).

Residues 1 to 20 (MLAKATLAIVLSAASLPVLA) form the signal peptide. Positions 21–149 (AQCEATIESN…MMKGTLKLSN (129 aa)) constitute a Plastocyanin-like domain. An intrachain disulfide couples cysteine 23 to cysteine 46. Residues histidine 66, cysteine 132, histidine 137, and methionine 141 each coordinate Cu cation.

It is found in the periplasm. Its function is as follows. Transfers electrons from cytochrome c551 to cytochrome oxidase. The sequence is that of Azurin (azu) from Achromobacter denitrificans (Alcaligenes denitrificans).